A 116-amino-acid polypeptide reads, in one-letter code: Aspartate 1-decarboxylase (116 aa).

The Schiff-base intermediate with substrate; via pyruvic acid role is filled by Ser-25. Ser-25 is modified (pyruvic acid (Ser)). Thr-57 contacts substrate. Tyr-58 (proton donor) is an active-site residue. 73-75 is a substrate binding site; it reads GAA.

This sequence belongs to the PanD family. Heterooctamer of four alpha and four beta subunits. Pyruvate is required as a cofactor. Is synthesized initially as an inactive proenzyme, which is activated by self-cleavage at a specific serine bond to produce a beta-subunit with a hydroxyl group at its C-terminus and an alpha-subunit with a pyruvoyl group at its N-terminus.

Its subcellular location is the cytoplasm. It carries out the reaction L-aspartate + H(+) = beta-alanine + CO2. It functions in the pathway cofactor biosynthesis; (R)-pantothenate biosynthesis; beta-alanine from L-aspartate: step 1/1. In terms of biological role, catalyzes the pyruvoyl-dependent decarboxylation of aspartate to produce beta-alanine. The sequence is that of Aspartate 1-decarboxylase from Phocaeicola vulgatus (strain ATCC 8482 / DSM 1447 / JCM 5826 / CCUG 4940 / NBRC 14291 / NCTC 11154) (Bacteroides vulgatus).